Reading from the N-terminus, the 57-residue chain is Large ribosomal subunit protein bL33 (57 aa).

Belongs to the bacterial ribosomal protein bL33 family.

The protein is Large ribosomal subunit protein bL33 of Shewanella sp. (strain W3-18-1).